A 278-amino-acid polypeptide reads, in one-letter code: PILR alpha-associated neural protein (278 aa).

Positions 1-27 are cleaved as a signal peptide; it reads MWSAQLLSQLLPLWPLLLLSVLPPAQG. A disordered region spans residues 25–93; sequence AQGSSHRSPP…PSGFEEGPPS (69 aa). At 28–174 the chain is on the extracellular side; it reads SSHRSPPAPA…FGGRGEGVDP (147 aa). Residue Thr136 is glycosylated (O-linked (GalNAc...) threonine). The helical transmembrane segment at 175–195 threads the bilayer; that stretch reads QLYVTITISIIIVLVATGIIF. Residues 196–278 are Cytoplasmic-facing; it reads KFCWDRSQKR…QLNRIPLVNL (83 aa). The segment at 206–278 is disordered; the sequence is RRPSGQQGAL…QLNRIPLVNL (73 aa). Positions 209-225 are enriched in polar residues; it reads SGQQGALRQEESQQPLT.

Post-translationally, O-glycosylation at Thr-136 is essential for recognition by PILRA. In terms of tissue distribution, mainly expressed in brain and spinal cord. Weak expression also detected in heart, kidney, spleen and lymph node. Virtually no expression detected in liver and embryo relative to brain.

It localises to the membrane. In terms of biological role, acts as a ligand for PILRA in neuronal tissues, where it may be involved in immune regulation. The sequence is that of PILR alpha-associated neural protein (Pianp) from Mus musculus (Mouse).